The chain runs to 138 residues: Protein FAM136A (138 aa).

An N-acetylalanine modification is found at Ala-2. 2 positions are modified to phosphothreonine: Thr-124 and Thr-126.

This sequence belongs to the FAM136 family.

In Bos taurus (Bovine), this protein is Protein FAM136A (FAM136A).